The primary structure comprises 317 residues: Enoyl-CoA delta isomerase 3, peroxisomal (317 aa).

The 46-residue stretch at 1-46 (MPKPGVFNFVNKATWDARNALGSLPKETARKNYVDLVSSLSSSSEA) folds into the ACB domain. Positions 40 to 60 (LSSSSEAPSQGKRGADEKARE) are disordered. 120 to 124 (SGNDL) contacts substrate. Residues 315-317 (AKL) carry the Microbody targeting signal motif.

This sequence belongs to the enoyl-CoA hydratase/isomerase family. In terms of tissue distribution, expressed at high levels in the kidney. Also detected at very low levels in the duodenum, jejunum, ileum, heart, liver, lung, and brown adipose tissue (at protein level). In the kidney, expression seems to be localized mainly to the proximal tubule.

The protein localises to the peroxisome. It carries out the reaction a (3Z)-enoyl-CoA = a 4-saturated (2E)-enoyl-CoA. The enzyme catalyses a (3E)-enoyl-CoA = a 4-saturated (2E)-enoyl-CoA. The catalysed reaction is (3E)-nonenoyl-CoA = (2E)-nonenoyl-CoA. In terms of biological role, catalyzes the isomerization of trans-3-nonenoyl-CoA into trans-2-nonenoyl-CoA. May also have activity towards other enoyl-CoA species. This Mus musculus (Mouse) protein is Enoyl-CoA delta isomerase 3, peroxisomal.